Here is a 207-residue protein sequence, read N- to C-terminus: Granulocyte colony-stimulating factor (207 aa).

The signal sequence occupies residues 1–30 (MAGPATQSPMKLMALQLLLWHSALWTVQEA). Intrachain disulfides connect cysteine 69–cysteine 75 and cysteine 97–cysteine 107. O-linked (GalNAc...) threonine glycosylation is present at threonine 166.

The protein belongs to the IL-6 superfamily. As to quaternary structure, monomer. In terms of processing, O-glycan consists of Gal-GalNAc disaccharide which can be modified with up to two sialic acid residues (done in recombinantly expressed G-CSF from CHO cells).

It localises to the secreted. Its function is as follows. Granulocyte/macrophage colony-stimulating factors are cytokines that act in hematopoiesis by controlling the production, differentiation, and function of 2 related white cell populations of the blood, the granulocytes and the monocytes-macrophages. This CSF induces granulocytes. The polypeptide is Granulocyte colony-stimulating factor (CSF3) (Homo sapiens (Human)).